The chain runs to 345 residues: N-acetyl-gamma-glutamyl-phosphate reductase (345 aa).

Cys-151 is a catalytic residue.

Belongs to the NAGSA dehydrogenase family. Type 1 subfamily.

The protein resides in the cytoplasm. The enzyme catalyses N-acetyl-L-glutamate 5-semialdehyde + phosphate + NADP(+) = N-acetyl-L-glutamyl 5-phosphate + NADPH + H(+). The protein operates within amino-acid biosynthesis; L-arginine biosynthesis; N(2)-acetyl-L-ornithine from L-glutamate: step 3/4. Its function is as follows. Catalyzes the NADPH-dependent reduction of N-acetyl-5-glutamyl phosphate to yield N-acetyl-L-glutamate 5-semialdehyde. The polypeptide is N-acetyl-gamma-glutamyl-phosphate reductase (Clostridium novyi (strain NT)).